Reading from the N-terminus, the 195-residue chain is Imidazoleglycerol-phosphate dehydratase (195 aa).

It belongs to the imidazoleglycerol-phosphate dehydratase family.

It localises to the cytoplasm. It carries out the reaction D-erythro-1-(imidazol-4-yl)glycerol 3-phosphate = 3-(imidazol-4-yl)-2-oxopropyl phosphate + H2O. It participates in amino-acid biosynthesis; L-histidine biosynthesis; L-histidine from 5-phospho-alpha-D-ribose 1-diphosphate: step 6/9. In Paracoccus denitrificans (strain Pd 1222), this protein is Imidazoleglycerol-phosphate dehydratase.